Reading from the N-terminus, the 202-residue chain is UPF0102 protein Dde_1093 (202 aa).

Belongs to the UPF0102 family.

This is UPF0102 protein Dde_1093 from Oleidesulfovibrio alaskensis (strain ATCC BAA-1058 / DSM 17464 / G20) (Desulfovibrio alaskensis).